A 141-amino-acid chain; its full sequence is VLSSHDKSNVKGLFGKVGGHLEEYCAETLARMFAAYPQTKTYFPHFDLQPGSAQVKAHGKKVAGALAEAANHIDDIASALSKLSDLHQHKLRVDPVNFKLLAHCFLVVMAIHHPSLLTPEVHASLDKFLCAVGTVLTAKYR.

Residues 1–141 enclose the Globin domain; the sequence is VLSSHDKSNV…VGTVLTAKYR (141 aa). His-58 lines the O2 pocket. His-87 contacts heme b.

It belongs to the globin family. In terms of assembly, heterotetramer of two alpha chains and two beta chains. In terms of tissue distribution, red blood cells.

In terms of biological role, involved in oxygen transport from the lung to the various peripheral tissues. This Phoenicopterus ruber (American flamingo) protein is Hemoglobin subunit alpha-A (HBAA).